The primary structure comprises 228 residues: Translin (228 aa).

The interval 86–90 (RFHEH) is DNA/RNA binding. Residues 177 to 198 (LDSGFRLLNLKNDSLRKRYDGL) are leucine-zipper. An N6-acetyllysine modification is found at K187. S190 bears the Phosphoserine mark. Residue K199 is modified to N6-acetyllysine.

It belongs to the translin family. In terms of assembly, ring-shaped heterooctamer of six TSN and two TSNAX subunits, DNA/RNA binding occurs inside the ring.

It is found in the cytoplasm. It localises to the nucleus. DNA-binding protein that specifically recognizes consensus sequences at the breakpoint junctions in chromosomal translocations, mostly involving immunoglobulin (Ig)/T-cell receptor gene segments. Seems to recognize single-stranded DNA ends generated by staggered breaks occurring at recombination hot spots. Its function is as follows. Exhibits both single-stranded and double-stranded endoribonuclease activity. May act as an activator of RNA-induced silencing complex (RISC) by facilitating endonucleolytic cleavage of the siRNA passenger strand. In Bos taurus (Bovine), this protein is Translin (TSN).